The sequence spans 230 residues: Proteasome subunit alpha (230 aa).

This sequence belongs to the peptidase T1A family. The 20S proteasome core is composed of 14 alpha and 14 beta subunits that assemble into four stacked heptameric rings, resulting in a barrel-shaped structure. The two inner rings, each composed of seven catalytic beta subunits, are sandwiched by two outer rings, each composed of seven alpha subunits. The catalytic chamber with the active sites is on the inside of the barrel. Has a gated structure, the ends of the cylinder being occluded by the N-termini of the alpha-subunits. Is capped by the proteasome-associated ATPase, ARC.

It localises to the cytoplasm. It functions in the pathway protein degradation; proteasomal Pup-dependent pathway. With respect to regulation, the formation of the proteasomal ATPase ARC-20S proteasome complex, likely via the docking of the C-termini of ARC into the intersubunit pockets in the alpha-rings, may trigger opening of the gate for substrate entry. Interconversion between the open-gate and close-gate conformations leads to a dynamic regulation of the 20S proteasome proteolysis activity. Component of the proteasome core, a large protease complex with broad specificity involved in protein degradation. The polypeptide is Proteasome subunit alpha (Thermomonospora curvata (strain ATCC 19995 / DSM 43183 / JCM 3096 / KCTC 9072 / NBRC 15933 / NCIMB 10081 / Henssen B9)).